The following is a 230-amino-acid chain: Ribosome-recycling factor, mitochondrial (230 aa).

The transit peptide at Met1–Ser24 directs the protein to the mitochondrion.

Belongs to the RRF family.

Its subcellular location is the mitochondrion. Necessary for protein synthesis in mitochondria. Functions as a ribosome recycling factor in mitochondria. The protein is Ribosome-recycling factor, mitochondrial (RRF1) of Saccharomyces cerevisiae (strain ATCC 204508 / S288c) (Baker's yeast).